The primary structure comprises 410 residues: Protein TIC 214 (410 aa).

6 helical membrane passes run 22–42, 61–81, 87–107, 131–151, 161–181, and 210–230; these read FVFGLICGSLLGTSMNVGSFI, GSAISETFFLFLILFGYIGVI, LEPSLTFIITVFCADTIIGFL, AVIVFGNPGSTWGATSLITSI, LFLFGVFLGIFVIGCGIGFLI, and LALCILILSTIYYHWQVYIGL.

This sequence belongs to the TIC214 family. In terms of assembly, part of the Tic complex.

It is found in the plastid. Its subcellular location is the chloroplast inner membrane. Involved in protein precursor import into chloroplasts. May be part of an intermediate translocation complex acting as a protein-conducting channel at the inner envelope. This is Protein TIC 214 from Mesostigma viride (Green alga).